The following is a 523-amino-acid chain: Tryptophan 6-halogenase SttH (523 aa).

Residues G14, S40, I43, V46, V48, and A51 each coordinate FAD. K79 is a catalytic residue. P97 contributes to the L-tryptophan binding site. Residues V203 and L354 each contribute to the FAD site. T365 and G366 together coordinate chloride. Position 367 (I367) interacts with FAD. L-tryptophan contacts are provided by Y456 and Y457.

The protein belongs to the flavin-dependent halogenase family. Bacterial tryptophan halogenase subfamily. In terms of assembly, homodimer.

It carries out the reaction L-tryptophan + FADH2 + chloride + O2 = 6-chloro-L-tryptophan + FAD + 2 H2O. The enzyme catalyses D-tryptophan + FADH2 + chloride + O2 = 6-chloro-D-tryptophan + FAD + 2 H2O. Its function is as follows. Catalyzes the chlorination of tryptophan (Trp) at C6 position to yield 6-chloro-tryptophan. Accepts both L and D-Trp as the substrates. The enzyme also uses bromide to yield 6-bromo-Trp. In vitro, can also catalyze the halogenation of 3-indolepropionic acid, N-methyltryptophan and non-indolic aromatic substrates such as kynurenine, anthranilamide and N-phenylanthranilic acid. The sequence is that of Tryptophan 6-halogenase SttH from Streptomyces toxytricini (Actinomyces toxytricini).